A 165-amino-acid polypeptide reads, in one-letter code: Coatomer subunit zeta (165 aa).

Belongs to the adaptor complexes small subunit family. Oligomeric complex that consists of at least the alpha, beta, beta', gamma, delta, epsilon and zeta subunits.

Its subcellular location is the cytoplasm. The protein resides in the golgi apparatus membrane. It is found in the cytoplasmic vesicle. The protein localises to the COPI-coated vesicle membrane. Its function is as follows. The coatomer is a cytosolic protein complex that binds to dilysine motifs and reversibly associates with Golgi non-clathrin-coated vesicles, which further mediate biosynthetic protein transport from the ER, via the Golgi up to the trans Golgi network. Coatomer complex is required for budding from Golgi membranes, and is essential for the retrograde Golgi-to-ER transport of dilysine-tagged proteins. The zeta subunit may be involved in regulating the coat assembly and, hence, the rate of biosynthetic protein transport due to its association-dissociation properties with the coatomer complex. This is Coatomer subunit zeta from Encephalitozoon cuniculi (strain GB-M1) (Microsporidian parasite).